We begin with the raw amino-acid sequence, 393 residues long: 4-hydroxyphenylpyruvate dioxygenase (393 aa).

2 consecutive VOC domains span residues 17–148 (AFDH…LLER) and 179–339 (FLDH…IFSK). Fe cation contacts are provided by His182, His267, and Glu350.

The protein belongs to the 4HPPD family. The cofactor is Fe cation.

It carries out the reaction 3-(4-hydroxyphenyl)pyruvate + O2 = homogentisate + CO2. Its pathway is amino-acid degradation; L-phenylalanine degradation; acetoacetate and fumarate from L-phenylalanine: step 3/6. Functionally, key enzyme in the degradation of tyrosine. This is 4-hydroxyphenylpyruvate dioxygenase (hpd-1) from Caenorhabditis briggsae.